We begin with the raw amino-acid sequence, 1119 residues long: MNNIYISLYIFFISYIIQLCFNTKYIYCDKKLYVSKNILPSVEKKEFVSNVPHKLEWLVHNILEVVHFLEDVNNYIVDFKKDILTKLEHIVQDDTELYESYEYNENLLNQIYLNNEKKLKRYSEYIEKLKDTKLQMFEDTINNFQRENIYYLNFVYKNLLAKIDLITNLNKKKLDKEKKKNVIELKEYLEDLKKRMFDMQKRLNDIIITKSTFLKNESELNMKLFETSAIDYVNNNSNFEVFSTYIINDFMLNKKRINVLNYDSNLFFKNNFMYFNFLHNYLKEKKDEHVLNVYIYLKDPLIQEYELNYFNYYVVLDLYILDVIIKNVDLLIEKKGKKRKNVNHILVCIDNYVVKYNVLSSNIYLDIQQDIKSFFHESNRNVDGSKIQDMLFHFERKNNSIYQNNMFHDKYYKKKIKKDIKEEKKQNDSLQKYNKNIDPLLFIRKKNIFFDSQKEYYKKFLSSYTYEEIVNILCNKSSRCNNRIFQLINDVNKNTFILKSHLALKNELKKFFQINQNKLLKNKTGVGLINSTKDDINRITNMNLATNTNNAMGNITNDSNIINTNNNNNTSDINNNNTSDINNNNTNNINNNNTNNINNNNTNNINNNTNNTNNNSNNNNNNNIFNNEDSLNKCSAYTYPFSNDAEKNYQENRNQSFSNSDHCFKLLNSIQGANKSSDFINMQNIDDYLNTYYVAYHESFKVVKKEHYYSVISHIFESYLNIDESSNDDDHPIHKKYPHLKGRNVSINFLGQLPEIMKVYKTFRYCDSLNVLAKSYIPKSPASVQSLDKGEDNNDNDEKGESGEDTQVIEKDDSGEDRQMIEKDDSGEDRQMIEKDDSGEDRQMIEKDDSGEDRQMIEKDDSGEDRQMIEKDDSGEDRQMIEKDKSRDDNKAQNNNSTDNEEHDEITEQIGFLKNHNQKYMRLFQKHLLEEIKFINFFEFLVQKKLGVILEKNEFLKLYIFYGQKNLPSMPYTPLFFTCRTIIKIEVLRDVNTNQIIYSSRSFFLETLITLKEYKIKNESAYIVIETTDESSTIKKRLKMDMLHKISPMSHINAYVISNKGKEIVYHKGNIYQRSASDIKNVISDIRNDFLNIILPQYHLFDLFDNYVYIIICLKNENC.

The first 21 residues, 1-21 (MNNIYISLYIFFISYIIQLCF), serve as a signal peptide directing secretion. Residues 170 to 206 (NKKKLDKEKKKNVIELKEYLEDLKKRMFDMQKRLNDI) are a coiled coil. Disordered regions lie at residues 606–627 (NNNTNNTNNNSNNNNNNNIFNN) and 782–905 (ASVQ…EHDE). A compositionally biased stretch (basic and acidic residues) spans 788 to 891 (DKGEDNNDND…EKDKSRDDNK (104 aa)). Residues 890–920 (NKAQNNNSTDNEEHDEITEQIGFLKNHNQKY) adopt a coiled-coil conformation.

This is an uncharacterized protein from Plasmodium falciparum (isolate 3D7).